The sequence spans 429 residues: UDP-N-acetylglucosamine 1-carboxyvinyltransferase (429 aa).

22–23 provides a ligand contact to phosphoenolpyruvate; the sequence is KN. Arg-102 serves as a coordination point for UDP-N-acetyl-alpha-D-glucosamine. The Proton donor role is filled by Cys-126. At Cys-126 the chain carries 2-(S-cysteinyl)pyruvic acid O-phosphothioketal. Residues 131–135, Asp-316, and Ile-338 contribute to the UDP-N-acetyl-alpha-D-glucosamine site; that span reads RPVDL.

The protein belongs to the EPSP synthase family. MurA subfamily.

Its subcellular location is the cytoplasm. It catalyses the reaction phosphoenolpyruvate + UDP-N-acetyl-alpha-D-glucosamine = UDP-N-acetyl-3-O-(1-carboxyvinyl)-alpha-D-glucosamine + phosphate. It participates in cell wall biogenesis; peptidoglycan biosynthesis. In terms of biological role, cell wall formation. Adds enolpyruvyl to UDP-N-acetylglucosamine. The protein is UDP-N-acetylglucosamine 1-carboxyvinyltransferase of Rhodopseudomonas palustris (strain TIE-1).